A 603-amino-acid polypeptide reads, in one-letter code: Glutathione-regulated potassium-efflux system protein KefB (603 aa).

13 helical membrane-spanning segments follow: residues 5-25 (ALLTAGVLFLFVAVVAVPIAA), 29-49 (IGAVLGYLIAGIAIGPWGLGF), 55-75 (AILHFSELGVVFLMFIIGLEL), 87-107 (IFGVGAAQVGLSTLLLGGALY), 115-135 (SALIGGVGLAMSSTAMALQLM), 152-172 (VLLFQDLAVIPALALIPILAG), 180-202 (WERIGLKVAAFLGMLIGGRYLVR), 207-227 (FIAASGVREVFTAAALLLVLG), 230-250 (LFMETLGLSMALGTFIAGILL), 268-288 (GLLLGLFFISVGMALNLGILY), 291-311 (IVKIMVAVLVLVAVKAAVLYF), 326-346 (FAGVLSQGGEFAFVLFSAAAS), and 356-376 (PLLLVTVTLSMMTTPLLMQLI). The region spanning 400–521 (EPQVIVVGFG…VRHFSRETFS (122 aa)) is the RCK N-terminal domain.

Belongs to the monovalent cation:proton antiporter 2 (CPA2) transporter (TC 2.A.37) family. KefB subfamily. As to quaternary structure, interacts with the regulatory subunit KefG.

Its subcellular location is the cell inner membrane. Pore-forming subunit of a potassium efflux system that confers protection against electrophiles. Catalyzes K(+)/H(+) antiport. The protein is Glutathione-regulated potassium-efflux system protein KefB of Pectobacterium carotovorum subsp. carotovorum (strain PC1).